Reading from the N-terminus, the 734-residue chain is Ribosomal biogenesis protein LAS1L (734 aa).

The tract at residues 204 to 255 is disordered; it reads EGIEEEDQEEDKNIVVDDITEQKPEPQDDGKSTESDVKADGDSKGSEEVDSH. Basic and acidic residues predominate over residues 214–255; sequence DKNIVVDDITEQKPEPQDDGKSTESDVKADGDSKGSEEVDSH. Glycyl lysine isopeptide (Lys-Gly) (interchain with G-Cter in SUMO2) cross-links involve residues Lys215 and Lys226. Phosphoserine is present on residues Ser441, Ser523, and Ser560. The span at 547–561 shows a compositional bias: polar residues; sequence GSEAKAQQQEEQGSV. Residues 547-619 are disordered; that stretch reads GSEAKAQQQE…PFSTGQESPT (73 aa). Basic and acidic residues predominate over residues 563 to 575; sequence DVKEEEKEEKEVL. Residues 578–605 show a composition bias toward acidic residues; the sequence is QVEEEEENDDQEEEEEDEDDEDDEEEDR. At Ser617 the chain carries Phosphoserine. The interval 636-655 is interaction with NOL9; it reads SAWQVSSEDVRWDTFPLGRM.

Belongs to the LAS1 family. In terms of assembly, component of some MLL1/MLL complex, at least composed of the core components KMT2A/MLL1, ASH2L, HCFC1/HCF1, WDR5 and RBBP5, as well as the facultative components BACC1, CHD8, E2F6, HSP70, INO80C, KANSL1, LAS1L, MAX, MCRS1, MGA, KAT8/MOF, PELP1, PHF20, PRP31, RING2, RUVB1/TIP49A, RUVB2/TIP49B, SENP3, TAF1, TAF4, TAF6, TAF7, TAF9 and TEX10. Component of the 5FMC complex, at least composed of PELP1, LAS1L, TEX10, WDR18 and SENP3; the complex interacts with methylated CHTOP and ZNF148. Interacts with NOL9 to form an ITS2 pre-rRNA endonuclease-kinase complex.

It localises to the nucleus. Its subcellular location is the nucleolus. The protein localises to the nucleoplasm. The protein resides in the cytoplasm. Functionally, required for the synthesis of the 60S ribosomal subunit and maturation of the 28S rRNA. Functions as a component of the Five Friends of Methylated CHTOP (5FMC) complex; the 5FMC complex is recruited to ZNF148 by methylated CHTOP, leading to desumoylation of ZNF148 and subsequent transactivation of ZNF148 target genes. Required for the efficient pre-rRNA processing at both ends of internal transcribed spacer 2 (ITS2). The polypeptide is Ribosomal biogenesis protein LAS1L (LAS1L) (Homo sapiens (Human)).